The sequence spans 341 residues: HTH-type transcriptional repressor PurR (341 aa).

The HTH lacI-type domain maps to 2 to 56; it reads ATIKDVAKRAGVSTTTVSHVINKTRFVADETKAAVWEAIKELHYSPSAVARSLKV. A DNA-binding region (H-T-H motif) is located at residues 4 to 23; sequence IKDVAKRAGVSTTTVSHVIN. Residues 48 to 56 mediate DNA binding; it reads SAVARSLKV. Residues Y73, R190, T192, F221, and D275 each contribute to the hypoxanthine site.

As to quaternary structure, homodimer.

Its pathway is purine metabolism; purine nucleotide biosynthesis [regulation]. In terms of biological role, is the main repressor of the genes involved in the de novo synthesis of purine nucleotides, regulating purB, purC, purEK, purF, purHD, purL, purMN and guaBA expression. PurR is allosterically activated to bind its cognate DNA by binding the purine corepressors, hypoxanthine or guanine, thereby effecting transcription repression. The protein is HTH-type transcriptional repressor PurR of Edwardsiella ictaluri (strain 93-146).